The primary structure comprises 407 residues: Imidazolonepropionase (407 aa).

Residues H75 and H77 each contribute to the Fe(3+) site. Residues H75 and H77 each contribute to the Zn(2+) site. Positions 84, 142, and 169 each coordinate 4-imidazolone-5-propanoate. Y142 serves as a coordination point for N-formimidoyl-L-glutamate. H232 contributes to the Fe(3+) binding site. Residue H232 participates in Zn(2+) binding. A 4-imidazolone-5-propanoate-binding site is contributed by Q235. Fe(3+) is bound at residue D306. D306 serves as a coordination point for Zn(2+). N-formimidoyl-L-glutamate contacts are provided by N308 and G310. T311 lines the 4-imidazolone-5-propanoate pocket.

The protein belongs to the metallo-dependent hydrolases superfamily. HutI family. It depends on Zn(2+) as a cofactor. Fe(3+) serves as cofactor.

The protein localises to the cytoplasm. The enzyme catalyses 4-imidazolone-5-propanoate + H2O = N-formimidoyl-L-glutamate. The protein operates within amino-acid degradation; L-histidine degradation into L-glutamate; N-formimidoyl-L-glutamate from L-histidine: step 3/3. Functionally, catalyzes the hydrolytic cleavage of the carbon-nitrogen bond in imidazolone-5-propanoate to yield N-formimidoyl-L-glutamate. It is the third step in the universal histidine degradation pathway. The protein is Imidazolonepropionase of Rhodococcus jostii (strain RHA1).